The sequence spans 568 residues: Phosphoprotein (568 aa).

The segment at 1–23 (MDQDALISKEDSEVEREASGGRE) is disordered. Over residues 7 to 20 (ISKEDSEVEREASG) the composition is skewed to basic and acidic residues. The N0 binding stretch occupies residues 33–41 (DAVLSSEPT). A disordered region spans residues 54–317 (INTLQRPGST…SPETDATKKG (264 aa)). Basic and acidic residues-rich tracts occupy residues 99–110 (AEAHARNVDKQN), 150–168 (GAEDENREMAANPDKRGED), and 175–193 (EEIRRSAPLPDEREGRADN). Phosphoserine; by host is present on residues Ser249, Ser257, and Ser260. Residues 344–411 (FESSRDASYV…SFRDIYKRFS (68 aa)) form a multimerization region. The stretch at 364-429 (YAEMAFNVCG…LLMSNLSTLH (66 aa)) forms a coiled coil. The segment at 412 to 445 (EYQKEQNSLLMSNLSTLHIITDRGGKTDNPDSPT) is l protein binding. Residues 433–462 (DRGGKTDNPDSPTRSPSVFAKTKENKTKAT) are disordered. A phosphoserine; by host mark is found at Ser447 and Ser449. A compositionally biased stretch (basic and acidic residues) spans 453-462 (KTKENKTKAT). The segment at 479–568 (DLLREDEFRE…VEEDIESLTN (90 aa)) is interaction with the nucleocapsid (N-RNA).

The protein belongs to the respirovirus P protein family. In terms of assembly, homotetramer. Interacts (via multimerization domain) with polymerase L; this interaction forms the polymerase complex. Interacts (via N-terminus) with N0; this interaction allows P to chaperon N0 before encapsidation and form the N-P complex. Interacts (via C-terminus) with N-RNA template; this interaction positions the polymerase on the template. In terms of processing, phosphorylated by PKC/PRKCZ, and other unknown kinases. Phosphorylation is necessary for viral transcription and replication. The N-terminus contains the majority of phosphorylated sites. Ser-249 is the major site of phosphorylation, but is not necessary for most functions.

It is found in the host cytoplasm. In terms of biological role, essential cofactor of the RNA polymerase L that plays a central role in the transcription and replication by forming the polymerase complex with RNA polymerase L and recruiting L to the genomic N-RNA template for RNA synthesis. Also plays a central role in the encapsidation of nascent RNA chains by forming the encapsidation complex with the nucleocapsid protein N (N-P complex). Acts as a chaperone for newly synthesized free N protein, so-called N0, allowing encapsidation of nascent RNA chains during replication. The nucleoprotein protein N prevents excessive phosphorylation of P, which leads to down-regulation of viral transcription/ replication. Participates, together with N, in the formation of viral factories (viroplasms), which are large inclusions in the host cytoplasm where replication takes place. Recruits host PI4KB and remodel the host endoplasmic reticulum membrane to form viral replication factories. The polypeptide is Phosphoprotein (P/V/C) (Sendai virus (strain Ohita) (SeV)).